The sequence spans 409 residues: DNA polymerase IV 2 (409 aa).

The region spanning isoleucine 5–glycine 190 is the UmuC domain. 2 residues coordinate Mg(2+): aspartate 9 and aspartate 105. Residue glutamate 106 is part of the active site.

The protein belongs to the DNA polymerase type-Y family. In terms of assembly, monomer. It depends on Mg(2+) as a cofactor.

The protein localises to the cytoplasm. It carries out the reaction DNA(n) + a 2'-deoxyribonucleoside 5'-triphosphate = DNA(n+1) + diphosphate. Functionally, poorly processive, error-prone DNA polymerase involved in untargeted mutagenesis. Copies undamaged DNA at stalled replication forks, which arise in vivo from mismatched or misaligned primer ends. These misaligned primers can be extended by PolIV. Exhibits no 3'-5' exonuclease (proofreading) activity. May be involved in translesional synthesis, in conjunction with the beta clamp from PolIII. In Halalkalibacterium halodurans (strain ATCC BAA-125 / DSM 18197 / FERM 7344 / JCM 9153 / C-125) (Bacillus halodurans), this protein is DNA polymerase IV 2 (dinB2).